The sequence spans 263 residues: Endonuclease 8 (263 aa).

Pro2 acts as the Schiff-base intermediate with DNA in catalysis. The active-site Proton donor is the Glu3. The active-site Proton donor; for beta-elimination activity is the Lys53. Residues Gln70, Arg125, and Asn169 each contribute to the DNA site. Residues 229–263 (KVFHRDGEACERCGGIIEKTTLSSRPFYWCPHCQK) form an FPG-type zinc finger. The active-site Proton donor; for delta-elimination activity is Arg253.

The protein belongs to the FPG family. It depends on Zn(2+) as a cofactor.

It carries out the reaction 2'-deoxyribonucleotide-(2'-deoxyribose 5'-phosphate)-2'-deoxyribonucleotide-DNA = a 3'-end 2'-deoxyribonucleotide-(2,3-dehydro-2,3-deoxyribose 5'-phosphate)-DNA + a 5'-end 5'-phospho-2'-deoxyribonucleoside-DNA + H(+). Involved in base excision repair of DNA damaged by oxidation or by mutagenic agents. Acts as a DNA glycosylase that recognizes and removes damaged bases. Has a preference for oxidized pyrimidines, such as thymine glycol, 5,6-dihydrouracil and 5,6-dihydrothymine. Has AP (apurinic/apyrimidinic) lyase activity and introduces nicks in the DNA strand. Cleaves the DNA backbone by beta-delta elimination to generate a single-strand break at the site of the removed base with both 3'- and 5'-phosphates. The polypeptide is Endonuclease 8 (Salmonella paratyphi B (strain ATCC BAA-1250 / SPB7)).